Consider the following 445-residue polypeptide: Phosphoglucosamine mutase (445 aa).

The Phosphoserine intermediate role is filled by Ser-102. Residues Ser-102, Asp-240, Asp-242, and Asp-244 each contribute to the Mg(2+) site. Ser-102 is modified (phosphoserine).

This sequence belongs to the phosphohexose mutase family. Mg(2+) serves as cofactor. Activated by phosphorylation.

The catalysed reaction is alpha-D-glucosamine 1-phosphate = D-glucosamine 6-phosphate. Its function is as follows. Catalyzes the conversion of glucosamine-6-phosphate to glucosamine-1-phosphate. This is Phosphoglucosamine mutase from Mycobacterium ulcerans (strain Agy99).